The chain runs to 141 residues: Hemoglobin subunit alpha-A (141 aa).

The Globin domain occupies 1 to 141; that stretch reads VLSGTDKTNV…VGAVLTAKYR (141 aa). An O2-binding site is contributed by H58. H87 is a heme b binding site.

It belongs to the globin family. In terms of assembly, heterotetramer of two alpha chains and two beta chains. Red blood cells.

Functionally, involved in oxygen transport from the lung to the various peripheral tissues. The chain is Hemoglobin subunit alpha-A (HBAA) from Struthio camelus (Common ostrich).